Here is a 159-residue protein sequence, read N- to C-terminus: Ribosome maturation factor RimP (159 aa).

Belongs to the RimP family.

It is found in the cytoplasm. Required for maturation of 30S ribosomal subunits. This is Ribosome maturation factor RimP from Geobacter sulfurreducens (strain ATCC 51573 / DSM 12127 / PCA).